The chain runs to 173 residues: 3-hydroxydecanoyl-[acyl-carrier-protein] dehydratase (173 aa).

His71 is an active-site residue.

It belongs to the thioester dehydratase family. FabA subfamily. Homodimer.

The protein localises to the cytoplasm. It catalyses the reaction a (3R)-hydroxyacyl-[ACP] = a (2E)-enoyl-[ACP] + H2O. It carries out the reaction (3R)-hydroxydecanoyl-[ACP] = (2E)-decenoyl-[ACP] + H2O. The catalysed reaction is (2E)-decenoyl-[ACP] = (3Z)-decenoyl-[ACP]. It participates in lipid metabolism; fatty acid biosynthesis. Its function is as follows. Necessary for the introduction of cis unsaturation into fatty acids. Catalyzes the dehydration of (3R)-3-hydroxydecanoyl-ACP to E-(2)-decenoyl-ACP and then its isomerization to Z-(3)-decenoyl-ACP. Can catalyze the dehydratase reaction for beta-hydroxyacyl-ACPs with saturated chain lengths up to 16:0, being most active on intermediate chain length. In Bradyrhizobium sp. (strain ORS 278), this protein is 3-hydroxydecanoyl-[acyl-carrier-protein] dehydratase.